The sequence spans 231 residues: Orotidine 5'-phosphate decarboxylase (231 aa).

Substrate-binding positions include Asp-9, Lys-34, 62–71, Thr-117, Arg-179, Gln-188, Gly-208, and Arg-209; that span reads DLKLHDIPSV. Catalysis depends on Lys-64, which acts as the Proton donor.

The protein belongs to the OMP decarboxylase family. Type 1 subfamily. Homodimer.

The catalysed reaction is orotidine 5'-phosphate + H(+) = UMP + CO2. The protein operates within pyrimidine metabolism; UMP biosynthesis via de novo pathway; UMP from orotate: step 2/2. Its function is as follows. Catalyzes the decarboxylation of orotidine 5'-monophosphate (OMP) to uridine 5'-monophosphate (UMP). This chain is Orotidine 5'-phosphate decarboxylase, found in Aquifex aeolicus (strain VF5).